Here is a 486-residue protein sequence, read N- to C-terminus: Protein pleiotropic regulatory locus 1 (486 aa).

The segment at 62-101 (EPVVSQPPRQPDRINEQPGPSNALSLAAPEGSKSTQKGAT) is disordered. WD repeat units follow at residues 174-204 (GHLGWVRSVAFDPSNEWFCTGSADRTIKIWD), 216-246 (GHIEQVRGLAVSNRHTYMFSAGDDKQVKCWD), 258-288 (GHLSGVYCLALHPTLDVLLTGGRDSVCRVWD), 300-330 (GHDNTVCSVFTRPTDPQVVTGSHDTTIKFWD), 342-371 (HHKKSVRAMTLHPKENAFASASADNTKKFS), 384-413 (QQKTIINAMAVNEDGVMVTGGDNGSIWFWD), and 433-463 (ESEAGIYAACYDNTGSRLVTCEADKTIKMWK). Short sequence motifs (DWD box) lie at residues 275–290 (LLTGGRDSVCRVWDIR) and 317–332 (VVTGSHDTTIKFWDLR). Residues 465 to 486 (DENATPETHPINFKPPKEIRRF) form a disordered region.

The protein belongs to the WD repeat PRL1/PRL2 family. In terms of assembly, component of the multiprotein assembly MOS4-associated complex (MAC) at least composed of MOS4, CDC5, PRL1 and PRP19. Interacts with CDC5. Component of the CUL4-RBX1-DDB1-PRL1 E3 ubiquitin-protein ligase complex. Interacts with DDB1A through its DWD motif. Interacts with AKIN10, AKIN11 and PIPC. Interacts with KAP2.

It localises to the nucleus. Its pathway is protein modification; protein ubiquitination. Its function is as follows. Pleiotropic regulator of glucose, stress and hormone responses. Also regulates cytochrome P450 CYP90A1/CPD. Coordinates the expression of hormone- and stress-related genes and genes related to cell wall modification and growth, leading to altered sugar-dependent growth and developmental responses. Component of the MAC complex that probably regulates defense responses through transcriptional control and thereby is essential for plant innate immunity. By suppressing the expression of several (1)O(2)-responsive genes, PRL1 seems to play a major role in modulating responses of plants to environmental changes by interconnecting (1)O(2)-mediated retrograde signaling with other signaling pathways. Acts as a negative regulator of SNF1-related protein kinases AKIN10 and AKIN11 via the inhibition of their interaction with SKP1/ASK1. Component of the CUL4-RBX1-DDB1-PRL1 E3 ubiquitin-protein ligase complex, PRL1 may function as the substrate recognition module within this complex, leading to the AKIN10 degradation. This is Protein pleiotropic regulatory locus 1 (PRL1) from Arabidopsis thaliana (Mouse-ear cress).